The following is a 237-amino-acid chain: Apoptosis regulator OPG045 (237 aa).

The protein belongs to the orthopoxvirus OPG045 family. Interacts with host BAK1, BAX and BID.

It localises to the host mitochondrion outer membrane. The protein localises to the host cytoplasm. In terms of biological role, plays a role in the inhibition of host apoptosis. Interacts with host BAX and thereby inhibits its activity. This is Apoptosis regulator OPG045 (OPG045) from Homo sapiens (Human).